Consider the following 684-residue polypeptide: Glycine--tRNA ligase beta subunit (684 aa).

It belongs to the class-II aminoacyl-tRNA synthetase family. In terms of assembly, tetramer of two alpha and two beta subunits.

It localises to the cytoplasm. The enzyme catalyses tRNA(Gly) + glycine + ATP = glycyl-tRNA(Gly) + AMP + diphosphate. This is Glycine--tRNA ligase beta subunit from Pseudomonas fluorescens (strain Pf0-1).